The following is a 351-amino-acid chain: Purine permease 3 (351 aa).

10 consecutive transmembrane segments (helical) span residues 4-24, 35-55, 72-92, 108-128, 132-152, 168-188, 207-227, 249-269, 274-294, and 304-324; these read ALVI…PLIM, IWFS…PLLF, FFLI…LSGF, TAAL…FFMV, FTPF…VLGM, ITGF…LPLV, FQLI…FIAG, VAVF…GLIF, LVSG…AVIF, and GLSL…EIKS. The 108-residue stretch at 45 to 152 folds into the EamA domain; it reads GFPVIFIPLL…LTVGAAVLGM (108 aa). A disordered region spans residues 329-351; it reads RRIQQEESQETEQSSLSRPISEC.

Belongs to the purine permeases (TC 2.A.7.14) family. As to expression, restricted to pollen.

Its subcellular location is the membrane. Functionally, may be involved in transport of purine derivatives during pollen germination and tube elongation. The protein is Purine permease 3 (PUP3) of Arabidopsis thaliana (Mouse-ear cress).